Reading from the N-terminus, the 311-residue chain is Ribosomal RNA small subunit methyltransferase H 1 (311 aa).

S-adenosyl-L-methionine is bound by residues 33–35, Asp-53, Phe-80, Asp-101, and Gln-108; that span reads AGH.

Belongs to the methyltransferase superfamily. RsmH family.

It is found in the cytoplasm. The enzyme catalyses cytidine(1402) in 16S rRNA + S-adenosyl-L-methionine = N(4)-methylcytidine(1402) in 16S rRNA + S-adenosyl-L-homocysteine + H(+). Functionally, specifically methylates the N4 position of cytidine in position 1402 (C1402) of 16S rRNA. The chain is Ribosomal RNA small subunit methyltransferase H 1 from Alkaliphilus metalliredigens (strain QYMF).